Here is a 54-residue protein sequence, read N- to C-terminus: Rubredoxin (54 aa).

A Rubredoxin-like domain is found at 1–54; it reads MKKYVCVVCGYIYDPAEGDPDNGVNPGTSFEDIPDDWVCPLCGVGKDQFEPSEE. Fe cation is bound by residues C6, C9, C39, and C42.

This sequence belongs to the rubredoxin family. The cofactor is Fe(3+).

Functionally, rubredoxin is a small nonheme, iron protein lacking acid-labile sulfide. Its single Fe, chelated to 4 Cys, functions as an electron acceptor and may also stabilize the conformation of the molecule. Functions as an intermediate component in the electron transfer chain: NADH-&gt;NROR-&gt;Rd-&gt;FprA1/2 in which Rd serves as the proximal electron donor to the FDPs that exhibit H(2)O-forming NADH oxidase activity. Also functions as the proximal electron donor to the Dfx and revRbr proteins that display superoxide reductase (SOR) and NADH peroxidase activity, respectively. Therefore, is a key electron carrier in an efficient multienzyme complex that can scavenge O(2) and reactive oxygen species (ROS), and thus plays an important role in the oxidative stress defense system in C.acetobutylicum, an obligate anaerobic bacterium. This Clostridium acetobutylicum (strain ATCC 824 / DSM 792 / JCM 1419 / IAM 19013 / LMG 5710 / NBRC 13948 / NRRL B-527 / VKM B-1787 / 2291 / W) protein is Rubredoxin (rd).